The chain runs to 305 residues: Putative F-box protein PP2-B8 (305 aa).

An F-box domain is found at 33 to 79 (VAELDDLPEECVSIIVSFTSPQDACVLASVSKTFASAVKSDIVWEKF).

This is Putative F-box protein PP2-B8 (PP2B8) from Arabidopsis thaliana (Mouse-ear cress).